Consider the following 482-residue polypeptide: Mannan endo-1,4-beta-mannosidase (482 aa).

The N-terminal stretch at 1 to 21 (MARTLRYLLCGILALAAGSNA) is a signal peptide. A CBM6 domain is found at 42-160 (TTYEAEDAIL…WYLVDSITLT (119 aa)). N-linked (GlcNAc...) asparagine glycosylation is found at N171 and N300. The GH26 domain occupies 181 to 474 (ASARALYDYL…YTSDYVLTLD (294 aa)). E332 functions as the Proton donor in the catalytic mechanism. The active-site Nucleophile is E422.

This sequence belongs to the glycosyl hydrolase 26 family.

The protein localises to the secreted. With respect to regulation, the activity is completely impaired by Ag(+), partially inhibited by Zn(2+), and enhanced by Co(2+), Ni(2+) and Cu(2+) by 22.6, 14.5 and 20.8 %, respectively. Ca(2+), Na(+), Mg(2+), Mn(2+), urea and EDTA do not significantly affect the mannanase activity. In terms of biological role, mannan endo-1,4-beta-mannosidase that exhibits high activity against konjac glucomannan and carob galactomannan, as well as a lower activity toward beta-mannan. Shows no activity against barley beta-glucan, birchwood xylan, and low viscosity carboxymethyl cellulose (CMC). Has the ability to hydrolyze manno-oligosaccharides such as M4 which is degraded slightly to M3 and M1, M5 which is mainly degraded to M4 and M1, and M6 which is mostly hydrolyzed to M4 and M2. Shows no activity toward M2 and M3 manno-oligosaccharides. In Thermothelomyces thermophilus (strain ATCC 42464 / BCRC 31852 / DSM 1799) (Sporotrichum thermophile), this protein is Mannan endo-1,4-beta-mannosidase.